We begin with the raw amino-acid sequence, 312 residues long: Bark storage protein B (312 aa).

An N-terminal signal peptide occupies residues 1 to 24 (MPQQSMQASLRDPIAEIERSNCKI). N70 carries an N-linked (GlcNAc...) asparagine glycan.

It to wound-inducible poplar endochitinases. In terms of assembly, monomer. As to expression, bark tissue.

Functionally, may play a role in nitrogen storage. The sequence is that of Bark storage protein B (BSP) from Populus deltoides (Eastern poplar).